We begin with the raw amino-acid sequence, 563 residues long: Membrane protein insertase YidC (563 aa).

The chain crosses the membrane as a helical span at residues 1 to 21; it reads MDIKRTILIVALAIVTYVGVL. The interval 43-62 is disordered; that stretch reads APGIPDTAAGTNGSASADVP. Transmembrane regions (helical) follow at residues 344 to 364, 370 to 390, 440 to 460, 471 to 491, and 518 to 538; these read LELT…FWLL, ILGN…GLFF, LGGC…YWVL, WILW…PIIM, and PIIF…YWVV.

Belongs to the OXA1/ALB3/YidC family. Type 1 subfamily. In terms of assembly, interacts with the Sec translocase complex via SecD. Specifically interacts with transmembrane segments of nascent integral membrane proteins during membrane integration.

It localises to the cell inner membrane. Its function is as follows. Required for the insertion and/or proper folding and/or complex formation of integral membrane proteins into the membrane. Involved in integration of membrane proteins that insert both dependently and independently of the Sec translocase complex, as well as at least some lipoproteins. Aids folding of multispanning membrane proteins. This chain is Membrane protein insertase YidC, found in Pseudomonas savastanoi pv. phaseolicola (strain 1448A / Race 6) (Pseudomonas syringae pv. phaseolicola (strain 1448A / Race 6)).